A 642-amino-acid chain; its full sequence is Bud site selection protein 5 (642 aa).

An N-terminal Ras-GEF domain is found at 224–339; it reads EVFRIQLYLN…DIVQLFINKK (116 aa). The 229-residue stretch at 412–640 folds into the Ras-GEF domain; that stretch reads SPWSLAKTLT…YQVSIAKVPR (229 aa).

As to quaternary structure, interacts with AXL2, BEM1, GSP1 and in haploid cells with AXL1.

It localises to the bud neck. The protein localises to the cytoplasm. It is found in the cell cortex. Functionally, GDP-GTP exchange factor (GEF) for the small GTPase BUD1/RSR1. Regulates the activity of BUD1 together with BUD2 which is a GTPase-activating protein (GAP) of BUD1. Required to produce both the axial and bipolar patterns of bud site selection. Determines the orientation of division axis. Overexpression can suppress mutations in PRP20 which is the GEF for GSP1. May be a cytoplasmic GEF for GSP1. Might also act on the Ras-like protein CDC42. Appears to bind to Ras proteins but not to activate them. The chain is Bud site selection protein 5 (BUD5) from Saccharomyces cerevisiae (strain ATCC 204508 / S288c) (Baker's yeast).